Consider the following 459-residue polypeptide: uncharacterized protein (459 aa).

An N6-(pyridoxal phosphate)lysine modification is found at K285.

It belongs to the class-III pyridoxal-phosphate-dependent aminotransferase family.

The protein localises to the cytoplasm. This is an uncharacterized protein from Schizosaccharomyces pombe (strain 972 / ATCC 24843) (Fission yeast).